Consider the following 417-residue polypeptide: Sterile alpha motif domain-containing protein 14 (417 aa).

The interval 37–306 is disordered; the sequence is LLVKGRRHRP…QETKCSYPYH (270 aa). Positions 40 to 49 are enriched in basic residues; it reads KGRRHRPSRS. 2 positions are modified to phosphoserine: S84 and S108. A compositionally biased stretch (low complexity) spans 138 to 153; it reads SGSPPRSAPSSDSSPS. The span at 159-173 shows a compositional bias: basic and acidic residues; sequence PRAEPHSEDDSRDAS. A phosphoserine mark is found at S173 and S179. Composition is skewed to low complexity over residues 244–260 and 276–289; these read SGKGSASSGSTTSPTCS and STLSDDSTPPSSSP. Position 279 is a phosphoserine (S279). Phosphothreonine is present on T283. Residues 326–389 enclose the SAM domain; sequence WTSQQVGQWL…KRKLKELAAA (64 aa). Residues 375–416 are a coiled coil; that stretch reads DRALVKRKLKELAAAAEKERKAQEKTARQREKLRRREHEAKK. Positions 390-417 are disordered; sequence AEKERKAQEKTARQREKLRRREHEAKKS.

The sequence is that of Sterile alpha motif domain-containing protein 14 (Samd14) from Rattus norvegicus (Rat).